The chain runs to 373 residues: D-alanine--D-alanine ligase (373 aa).

An ATP-grasp domain is found at 156–363 (KKLLAADGLP…YPTLLATMIE (208 aa)). An ATP-binding site is contributed by 184 to 239 (CERLGLPVFVKPARGGSSIGVSRVSSWDQLPAAVARARRHDPKVIVEAAISGRELE). Mg(2+)-binding residues include Asp318, Glu330, and Asn332.

It belongs to the D-alanine--D-alanine ligase family. It depends on Mg(2+) as a cofactor. Mn(2+) is required as a cofactor.

The protein localises to the cytoplasm. It carries out the reaction 2 D-alanine + ATP = D-alanyl-D-alanine + ADP + phosphate + H(+). Its pathway is cell wall biogenesis; peptidoglycan biosynthesis. Its function is as follows. Cell wall formation. This is D-alanine--D-alanine ligase from Mycobacterium bovis (strain BCG / Pasteur 1173P2).